Consider the following 357-residue polypeptide: GDP-polyphosphate phosphotransferase (357 aa).

A disordered region spans residues 1-83; it reads MSEEPTVSPP…DSTSASLPAN (83 aa). Positions 14-25 are enriched in low complexity; it reads QPAAQPAKPARP. Positions 26–40 are enriched in basic residues; the sequence is AARRAPRKPATRRPR.

This sequence belongs to the polyphosphate kinase 2 (PPK2) family. Class I subfamily. In terms of assembly, homotetramer. Also forms octamers. Mg(2+) is required as a cofactor. It depends on Mn(2+) as a cofactor.

It catalyses the reaction [phosphate](n) + GTP = [phosphate](n+1) + GDP. The catalysed reaction is [phosphate](n) + ATP = [phosphate](n+1) + ADP. Its function is as follows. Uses inorganic polyphosphate (polyP) as a donor to convert GDP to GTP and ADP to ATP. Shows a preference for GDP. Can also catalyze the synthesis of polyP from GTP or ATP, but the rate of polyP utilization is 75-fold greater than the rate of polyP synthesis. The polypeptide is GDP-polyphosphate phosphotransferase (Pseudomonas aeruginosa (strain ATCC 15692 / DSM 22644 / CIP 104116 / JCM 14847 / LMG 12228 / 1C / PRS 101 / PAO1)).